The primary structure comprises 364 residues: Aminomethyltransferase (364 aa).

It belongs to the GcvT family. In terms of assembly, the glycine cleavage system is composed of four proteins: P, T, L and H.

It catalyses the reaction N(6)-[(R)-S(8)-aminomethyldihydrolipoyl]-L-lysyl-[protein] + (6S)-5,6,7,8-tetrahydrofolate = N(6)-[(R)-dihydrolipoyl]-L-lysyl-[protein] + (6R)-5,10-methylene-5,6,7,8-tetrahydrofolate + NH4(+). The glycine cleavage system catalyzes the degradation of glycine. The chain is Aminomethyltransferase from Shewanella denitrificans (strain OS217 / ATCC BAA-1090 / DSM 15013).